Reading from the N-terminus, the 427-residue chain is Citrate synthase (427 aa).

The residue at position 283 (lysine 283) is an N6-acetyllysine. Active-site residues include histidine 306 and aspartate 363.

Belongs to the citrate synthase family. As to quaternary structure, homohexamer.

It carries out the reaction oxaloacetate + acetyl-CoA + H2O = citrate + CoA + H(+). Its pathway is carbohydrate metabolism; tricarboxylic acid cycle; isocitrate from oxaloacetate: step 1/2. The polypeptide is Citrate synthase (gltA) (Escherichia coli O6:H1 (strain CFT073 / ATCC 700928 / UPEC)).